Consider the following 135-residue polypeptide: Large ribosomal subunit protein uL18c (135 aa).

It belongs to the universal ribosomal protein uL18 family. Part of the 50S ribosomal subunit; contacts the 5S rRNA.

It is found in the plastid. It localises to the chloroplast. Its function is as follows. Binds 5S rRNA, forms part of the central protuberance of the 50S subunit. This chain is Large ribosomal subunit protein uL18c (rpl18), found in Phaeodactylum tricornutum (strain CCAP 1055/1).